A 463-amino-acid polypeptide reads, in one-letter code: Chaperone SurA (463 aa).

The signal sequence occupies residues 1–25 (MTKPFSVVLASLLAITSTVSPLASA). PpiC domains follow at residues 174 to 276 (GSQY…KLVE) and 289 to 388 (VTEY…QRVG). Disordered stretches follow at residues 328–348 (QATAKESSEDTNSRGQGGDLG) and 432–463 (RTGDRADDNATAAPAKSADPAAPSPPPAKPTR). The segment covering 440–452 (NATAAPAKSADPA) has biased composition (low complexity). Over residues 453–463 (APSPPPAKPTR) the composition is skewed to pro residues.

The protein resides in the periplasm. It catalyses the reaction [protein]-peptidylproline (omega=180) = [protein]-peptidylproline (omega=0). In terms of biological role, chaperone involved in the correct folding and assembly of outer membrane proteins. Recognizes specific patterns of aromatic residues and the orientation of their side chains, which are found more frequently in integral outer membrane proteins. May act in both early periplasmic and late outer membrane-associated steps of protein maturation. This is Chaperone SurA from Xanthomonas euvesicatoria pv. vesicatoria (strain 85-10) (Xanthomonas campestris pv. vesicatoria).